Here is a 96-residue protein sequence, read N- to C-terminus: Gastrolith matrix protein (96 aa).

Repeat copies occupy residues 11–15, 16–20, 21–25, 30–34, 35–39, 50–54, 55–59, 65–69, and 70–74. Residues 11-74 form a 9 X 5 AA tandem repeat of G-S-X-X-F region; the sequence is GSAGFGSTNF…GSTGFGSSSF (64 aa). The disordered stretch occupies residues 75-96; it reads GSTSGLPYLVVIPNNPAVGGLR.

The N-terminus is blocked. Expressed in the gastroliths.

The protein localises to the secreted. Associates with chitin and plays a role in calcification. The polypeptide is Gastrolith matrix protein (Procambarus clarkii (Red swamp crayfish)).